The primary structure comprises 893 residues: Translation initiation factor IF-2 (893 aa).

The interval 1–266 (MVDTKNPGDK…AKPAPSKQRG (266 aa)) is disordered. Residues 59 to 70 (PADAPTAAAAAP) show a composition bias toward low complexity. The span at 71–92 (APAPAPVPSAAPRPAAPPPPSR) shows a compositional bias: pro residues. Positions 93–104 (PQQSRSQSPSRS) are enriched in low complexity. Composition is skewed to basic and acidic residues over residues 128–148 (ARVR…RRNS) and 155–196 (AERE…EAKR). Residues 197–226 (PAAAATPAKSATPAARPTGAPAVRAPGVAA) are compositionally biased toward low complexity. The 172-residue stretch at 389–560 (PRSPVVTVMG…ALQAELLDLK (172 aa)) folds into the tr-type G domain. The tract at residues 398–405 (GHVDHGKT) is G1. A GTP-binding site is contributed by 398-405 (GHVDHGKT). Residues 423-427 (GITQH) form a G2 region. The segment at 446-449 (DTPG) is G3. GTP contacts are provided by residues 446-450 (DTPGH) and 500-503 (NKID). A G4 region spans residues 500–503 (NKID). The G5 stretch occupies residues 536–538 (SAK).

This sequence belongs to the TRAFAC class translation factor GTPase superfamily. Classic translation factor GTPase family. IF-2 subfamily.

Its subcellular location is the cytoplasm. One of the essential components for the initiation of protein synthesis. Protects formylmethionyl-tRNA from spontaneous hydrolysis and promotes its binding to the 30S ribosomal subunits. Also involved in the hydrolysis of GTP during the formation of the 70S ribosomal complex. The protein is Translation initiation factor IF-2 of Rhodopseudomonas palustris (strain BisA53).